A 311-amino-acid polypeptide reads, in one-letter code: Ornithine carbamoyltransferase (311 aa).

Carbamoyl phosphate-binding positions include Q85, R109, and 136 to 139 (HPCQ). Residues N167, D231, and 235–236 (SM) contribute to the L-ornithine site. Carbamoyl phosphate-binding positions include 271 to 272 (CL) and R299.

Belongs to the aspartate/ornithine carbamoyltransferase superfamily. OTCase family.

It localises to the cytoplasm. It catalyses the reaction carbamoyl phosphate + L-ornithine = L-citrulline + phosphate + H(+). It functions in the pathway amino-acid biosynthesis; L-arginine biosynthesis; L-arginine from L-ornithine and carbamoyl phosphate: step 1/3. Reversibly catalyzes the transfer of the carbamoyl group from carbamoyl phosphate (CP) to the N(epsilon) atom of ornithine (ORN) to produce L-citrulline. In Geobacillus stearothermophilus (Bacillus stearothermophilus), this protein is Ornithine carbamoyltransferase (argF).